The sequence spans 479 residues: Aspartyl/glutamyl-tRNA(Asn/Gln) amidotransferase subunit B (479 aa).

Belongs to the GatB/GatE family. GatB subfamily. As to quaternary structure, heterotrimer of A, B and C subunits.

The catalysed reaction is L-glutamyl-tRNA(Gln) + L-glutamine + ATP + H2O = L-glutaminyl-tRNA(Gln) + L-glutamate + ADP + phosphate + H(+). It catalyses the reaction L-aspartyl-tRNA(Asn) + L-glutamine + ATP + H2O = L-asparaginyl-tRNA(Asn) + L-glutamate + ADP + phosphate + 2 H(+). Allows the formation of correctly charged Asn-tRNA(Asn) or Gln-tRNA(Gln) through the transamidation of misacylated Asp-tRNA(Asn) or Glu-tRNA(Gln) in organisms which lack either or both of asparaginyl-tRNA or glutaminyl-tRNA synthetases. The reaction takes place in the presence of glutamine and ATP through an activated phospho-Asp-tRNA(Asn) or phospho-Glu-tRNA(Gln). The chain is Aspartyl/glutamyl-tRNA(Asn/Gln) amidotransferase subunit B from Streptococcus pyogenes serotype M49 (strain NZ131).